The chain runs to 97 residues: DNA-directed RNA polymerase subunit omega (97 aa).

This sequence belongs to the RNA polymerase subunit omega family. The RNAP catalytic core consists of 2 alpha, 1 beta, 1 beta' and 1 omega subunit. When a sigma factor is associated with the core the holoenzyme is formed, which can initiate transcription.

It carries out the reaction RNA(n) + a ribonucleoside 5'-triphosphate = RNA(n+1) + diphosphate. Its function is as follows. Promotes RNA polymerase assembly. Latches the N- and C-terminal regions of the beta' subunit thereby facilitating its interaction with the beta and alpha subunits. This chain is DNA-directed RNA polymerase subunit omega, found in Coxiella burnetii (strain CbuK_Q154) (Coxiella burnetii (strain Q154)).